Reading from the N-terminus, the 439-residue chain is Ribosomal protein uS12 methylthiotransferase RimO (439 aa).

In terms of domain architecture, MTTase N-terminal spans K3–G115. Residues C12, C46, C78, C147, C151, and C154 each contribute to the [4Fe-4S] cluster site. Residues T133–A362 enclose the Radical SAM core domain.

Belongs to the methylthiotransferase family. RimO subfamily. The cofactor is [4Fe-4S] cluster.

The protein localises to the cytoplasm. It carries out the reaction L-aspartate(89)-[ribosomal protein uS12]-hydrogen + (sulfur carrier)-SH + AH2 + 2 S-adenosyl-L-methionine = 3-methylsulfanyl-L-aspartate(89)-[ribosomal protein uS12]-hydrogen + (sulfur carrier)-H + 5'-deoxyadenosine + L-methionine + A + S-adenosyl-L-homocysteine + 2 H(+). Catalyzes the methylthiolation of an aspartic acid residue of ribosomal protein uS12. The chain is Ribosomal protein uS12 methylthiotransferase RimO from Wolinella succinogenes (strain ATCC 29543 / DSM 1740 / CCUG 13145 / JCM 31913 / LMG 7466 / NCTC 11488 / FDC 602W) (Vibrio succinogenes).